A 507-amino-acid chain; its full sequence is MEKYQFIKQVGDGAYGDVIKAIDVKTGEIVAIKRMKKKFSDWKECIQLREIKALKKLKHPNIVKLLEIILERDELFFVFEYLENNLYESIKDRTKLLPETTIRNIIYQILQALHFMHTNGFFHRDLKPENIMLVGERLKIADFGLAREIESKPPFTDYISTRWYRAPEVLLRCTYYNAPIDIWAVGAIMAELYSLKPMFPGSSEIDQLFKICTIMGSPTSATWIDGIKLANSMGFTFPNVQPPSINPLSTLLPNANQDAIELITDLLQYDPLKRPTPLQALQHRYFKVSIPSSILLKPNFIELSNKYLIKNGYINNNINNNSNYSNNNNNNNLNSNSENLNNVNKNNQQPHSPQKIQTPKPKNSFLRKSRYSYLNNVSLENVNNNNNNYNSNTTSGYYNQKLDSTPRLSPRIVRQQQQQILLPLIIQQQPPPQSQPPQSQPPPQSQPPPILTQQQQQQQQQQQQQQQLPSKTTIYHNTNHLNAPIPPNHQRGISPQFYNETTNNSKL.

The region spanning 4-286 (YQFIKQVGDG…PLQALQHRYF (283 aa)) is the Protein kinase domain. ATP is bound by residues 10–18 (VGDGAYGDV) and Lys33. Asp125 acts as the Proton acceptor in catalysis. Residues 323 to 347 (NYSNNNNNNNLNSNSENLNNVNKNN) show a composition bias toward low complexity. 3 disordered regions span residues 323-364 (NYSN…PKNS), 381-404 (NVNN…KLDS), and 428-507 (QQPP…NSKL). The span at 348–361 (QQPHSPQKIQTPKP) shows a compositional bias: polar residues. The segment covering 381–399 (NVNNNNNNYNSNTTSGYYN) has biased composition (low complexity). Residues 429–450 (QPPPQSQPPQSQPPPQSQPPPI) show a composition bias toward pro residues. Residues 451–470 (LTQQQQQQQQQQQQQQQLPS) are compositionally biased toward low complexity. Composition is skewed to polar residues over residues 471 to 481 (KTTIYHNTNHL) and 491 to 507 (RGIS…NSKL).

The protein belongs to the protein kinase superfamily. CMGC Ser/Thr protein kinase family. CDC2/CDKX subfamily.

It catalyses the reaction L-seryl-[protein] + ATP = O-phospho-L-seryl-[protein] + ADP + H(+). The enzyme catalyses L-threonyl-[protein] + ATP = O-phospho-L-threonyl-[protein] + ADP + H(+). In Dictyostelium discoideum (Social amoeba), this protein is Probable serine/threonine-protein kinase DDB_G0268078.